The primary structure comprises 167 residues: MIIQIEEYFIGMIFKGNQLVRNTIPLRREEIFNFMDGEVVSNPEDEHLKVAEIILKLYFAEIDDKKVRELISYKLEVPEFTKKVLDIVKDIEFGKTLTYGDIAKKLNTSPRAVGMALKRNPLPLIIPCHRVVAKNSLGGYSYGLDKKKFILERERLNMVSFKFNKVY.

The active-site Nucleophile; methyl group acceptor is Cys128.

Belongs to the MGMT family.

The protein resides in the cytoplasm. The enzyme catalyses a 6-O-methyl-2'-deoxyguanosine in DNA + L-cysteinyl-[protein] = S-methyl-L-cysteinyl-[protein] + a 2'-deoxyguanosine in DNA. The catalysed reaction is a 4-O-methyl-thymidine in DNA + L-cysteinyl-[protein] = a thymidine in DNA + S-methyl-L-cysteinyl-[protein]. Involved in the cellular defense against the biological effects of O6-methylguanine (O6-MeG) and O4-methylthymine (O4-MeT) in DNA. Repairs the methylated nucleobase in DNA by stoichiometrically transferring the methyl group to a cysteine residue in the enzyme. This is a suicide reaction: the enzyme is irreversibly inactivated. The protein is Methylated-DNA--protein-cysteine methyltransferase of Methanocaldococcus jannaschii (strain ATCC 43067 / DSM 2661 / JAL-1 / JCM 10045 / NBRC 100440) (Methanococcus jannaschii).